Here is a 735-residue protein sequence, read N- to C-terminus: Disintegrin and metalloproteinase domain-containing protein 2 (735 aa).

An N-terminal signal peptide occupies residues 1–16 (MWRVLFLLSGLGGLWM). Positions 17–174 (DSNFDSLPVQ…FKLQSIEPQK (158 aa)) are excised as a propeptide. At 17 to 686 (DSNFDSLPVQ…ENVYHSKPMR (670 aa)) the chain is on the extracellular side. Residues Asn-76, Asn-122, and Asn-220 are each glycosylated (N-linked (GlcNAc...) asparagine). Positions 178 to 375 (KYIEMHVVVE…QKSQCLHNQP (198 aa)) constitute a Peptidase M12B domain. 4 cysteine pairs are disulfide-bonded: Cys-287/Cys-370, Cys-329/Cys-354, Cys-331/Cys-336, and Cys-445/Cys-465. N-linked (GlcNAc...) asparagine glycans are attached at residues Asn-353, Asn-459, and Asn-566. In terms of domain architecture, Disintegrin spans 384–473 (QAVCGNAKLE…SCPENHFIQT (90 aa)). The EGF-like domain occupies 612 to 645 (LGYDCTTDKCNHRGVCNNKKHCHCSASYLPPDCS). 3 disulfides stabilise this stretch: Cys-616–Cys-627, Cys-621–Cys-633, and Cys-635–Cys-644. A helical membrane pass occupies residues 687 to 707 (WPLFLFIPFFIIFCVLIAIMV). Over 708 to 735 (KVHFQRKKWRTEDYSTDEQPESESEPKG) the chain is Cytoplasmic. Ser-729 carries the post-translational modification Phosphoserine.

Heterodimer with ADAM1/fertilin subunit alpha. The signal and the metalloprotease domain are cleaved during the epididymal maturation of the spermatozoa. In terms of tissue distribution, expressed specifically in testis.

Its subcellular location is the membrane. Sperm surface membrane protein that may be involved in sperm-egg plasma membrane adhesion and fusion during fertilization. Could have a direct role in sperm-zona binding or migration of sperm from the uterus into the oviduct. Interactions with egg membrane could be mediated via binding between its disintegrin-like domain to one or more integrins receptors on the egg. This is a non catalytic metalloprotease-like protein. The sequence is that of Disintegrin and metalloproteinase domain-containing protein 2 (ADAM2) from Macaca fascicularis (Crab-eating macaque).